The sequence spans 158 residues: Small ribosomal subunit protein uS17 (158 aa).

N-acetylalanine is present on A2. Residue R22 is modified to Citrulline. 3 positions are modified to N6-acetyllysine: K38, K45, and K58. C60 carries S-palmitoyl cysteine lipidation. At S67 the chain carries Phosphoserine. R69 carries the omega-N-methylarginine modification. S110 bears the Phosphoserine mark.

Belongs to the universal ribosomal protein uS17 family. As to quaternary structure, component of the small ribosomal subunit. Part of the small subunit (SSU) processome, composed of more than 70 proteins and the RNA chaperone small nucleolar RNA (snoRNA) U3. Citrullinated by PADI4.

It localises to the cytoplasm. The protein resides in the nucleus. The protein localises to the nucleolus. Component of the small ribosomal subunit. The ribosome is a large ribonucleoprotein complex responsible for the synthesis of proteins in the cell. Part of the small subunit (SSU) processome, first precursor of the small eukaryotic ribosomal subunit. During the assembly of the SSU processome in the nucleolus, many ribosome biogenesis factors, an RNA chaperone and ribosomal proteins associate with the nascent pre-rRNA and work in concert to generate RNA folding, modifications, rearrangements and cleavage as well as targeted degradation of pre-ribosomal RNA by the RNA exosome. The protein is Small ribosomal subunit protein uS17 (RPS11) of Canis lupus familiaris (Dog).